A 346-amino-acid chain; its full sequence is Biotin synthase (346 aa).

In terms of domain architecture, Radical SAM core spans 38–256 (RQVQVSTLLS…IAVARIMMPT (219 aa)). Cys-53, Cys-57, and Cys-60 together coordinate [4Fe-4S] cluster. 4 residues coordinate [2Fe-2S] cluster: Cys-97, Cys-128, Cys-188, and Arg-260.

Belongs to the radical SAM superfamily. Biotin synthase family. In terms of assembly, homodimer. It depends on [4Fe-4S] cluster as a cofactor. [2Fe-2S] cluster serves as cofactor.

The catalysed reaction is (4R,5S)-dethiobiotin + (sulfur carrier)-SH + 2 reduced [2Fe-2S]-[ferredoxin] + 2 S-adenosyl-L-methionine = (sulfur carrier)-H + biotin + 2 5'-deoxyadenosine + 2 L-methionine + 2 oxidized [2Fe-2S]-[ferredoxin]. The protein operates within cofactor biosynthesis; biotin biosynthesis; biotin from 7,8-diaminononanoate: step 2/2. Catalyzes the conversion of dethiobiotin (DTB) to biotin by the insertion of a sulfur atom into dethiobiotin via a radical-based mechanism. In Escherichia coli (strain K12 / DH10B), this protein is Biotin synthase.